We begin with the raw amino-acid sequence, 454 residues long: MMATSKRGTWATIRRIAASDRISGLIMLGFALAGLLLANLPFTAHAFEQLENFHIAIPHTNIDMGLGHWVQDGLLTVFFLTVGLELKQELTTGSLSNPKAAAVPMLCAVGGMLAPPVLFIGVISLFAAAGSGQLVIASGTSFSFAQMSNGWAVPTATDIAFSLAVLALFAKALPGSIRAFLMTLATVDDLLAIILIAVFFSSVNAWYWFLGIAVCAVVWYFLVRMRKVPWLAVAIVGVLAWVMMFEAGVHPTLAGVLVGLLTPAHERFGEKTPRAERYADKLQPFSALLALPIFALFATGVHFESLTLALFVSPVVVAVMVALVVGKPLGIMTTAWLSTHVGGLKMAKGLRVRDMFPAACACGIGFTVSFLIASLAYQDAELSAEARFGVLVGSMVAAVISGILLSRQSKRFELEDGTKHKHHTGDEDAMNEVETVLEDGTVVVSQIIGTHQEQ.

The next 10 membrane-spanning stretches (helical) occupy residues 22-42 (ISGLIMLGFALAGLLLANLPF), 64-84 (MGLGHWVQDGLLTVFFLTVGL), 106-126 (LCAVGGMLAPPVLFIGVISLF), 150-170 (GWAVPTATDIAFSLAVLALFA), 190-210 (LLAIILIAVFFSSVNAWYWFL), 228-248 (VPWLAVAIVGVLAWVMMFEAG), 284-304 (PFSALLALPIFALFATGVHFE), 306-326 (LTLALFVSPVVVAVMVALVVG), 355-375 (MFPAACACGIGFTVSFLIASL), and 386-406 (ARFGVLVGSMVAAVISGILLS).

The protein belongs to the NhaA Na(+)/H(+) (TC 2.A.33) antiporter family.

It localises to the cell membrane. The enzyme catalyses Na(+)(in) + 2 H(+)(out) = Na(+)(out) + 2 H(+)(in). Na(+)/H(+) antiporter that extrudes sodium in exchange for external protons. The polypeptide is Na(+)/H(+) antiporter NhaA (Bifidobacterium adolescentis (strain ATCC 15703 / DSM 20083 / NCTC 11814 / E194a)).